Reading from the N-terminus, the 111-residue chain is MADPQLITTAFDIPGYRIERSLGVARGIVVRSRSIVGTFGASIQTLFGGNISLYTSLCERARQDAYERMIDEARRMGGNAIVGMRYDATEIASGVTEVLCYGTAVQAVRAG.

It belongs to the UPF0145 family.

The protein is UPF0145 protein BMA10229_A0446 of Burkholderia mallei (strain NCTC 10229).